The chain runs to 375 residues: Homoserine O-succinyltransferase (375 aa).

Residues 48-358 (NAVLVCHALS…DAGHDSFLLD (311 aa)) form the AB hydrolase-1 domain. Catalysis depends on S154, which acts as the Nucleophile. R224 is a substrate binding site. Residues D319 and H352 contribute to the active site. Position 353 (D353) interacts with substrate.

The protein belongs to the AB hydrolase superfamily. MetX family. As to quaternary structure, homodimer.

The protein localises to the cytoplasm. It carries out the reaction L-homoserine + succinyl-CoA = O-succinyl-L-homoserine + CoA. It participates in amino-acid biosynthesis; L-methionine biosynthesis via de novo pathway; O-succinyl-L-homoserine from L-homoserine: step 1/1. Functionally, transfers a succinyl group from succinyl-CoA to L-homoserine, forming succinyl-L-homoserine. This Aromatoleum aromaticum (strain DSM 19018 / LMG 30748 / EbN1) (Azoarcus sp. (strain EbN1)) protein is Homoserine O-succinyltransferase.